A 220-amino-acid polypeptide reads, in one-letter code: MKRTKNINRETFRKSWRDYRVAPVALAISAVFMLAGCEKSDETVSMYQNADDCSRTNPSMSEQCTTAYNNALKEAEKTAPKYATREDCVAEFGEAQCTQAPAPAQAGMAAESQSSGSMWMPLMAGYMMGRMMGGSGFAQQPLFTSKNAASPANGKFVDASGKSYGPATAGGRTMTVPKTAMAPKPAVTNTVTRGGFGESVAKQTSMQRSSATSSSRSMGG.

The interval 181-220 is disordered; it reads MAPKPAVTNTVTRGGFGESVAKQTSMQRSSATSSSRSMGG. Residues 203–220 show a composition bias toward low complexity; the sequence is QTSMQRSSATSSSRSMGG.

The protein belongs to the UPF0441 family.

The polypeptide is UPF0441 protein Spro_4274 (Serratia proteamaculans (strain 568)).